We begin with the raw amino-acid sequence, 335 residues long: NADH-quinone oxidoreductase subunit H (335 aa).

Helical transmembrane passes span 11–31 (VILT…AGAL), 81–101 (VIFT…FAII), 114–134 (IGLL…LFAG), 154–174 (VSYE…VGSF), 187–207 (LWFI…GVAV), 238–258 (FFVG…TLFF), 270–290 (QLSF…FILL), and 307–327 (WKFC…IVLW).

This sequence belongs to the complex I subunit 1 family. NDH-1 is composed of 13 different subunits. Subunits NuoA, H, J, K, L, M, N constitute the membrane sector of the complex.

Its subcellular location is the cell inner membrane. The enzyme catalyses a quinone + NADH + 5 H(+)(in) = a quinol + NAD(+) + 4 H(+)(out). In terms of biological role, NDH-1 shuttles electrons from NADH, via FMN and iron-sulfur (Fe-S) centers, to quinones in the respiratory chain. The immediate electron acceptor for the enzyme in this species is believed to be ubiquinone. Couples the redox reaction to proton translocation (for every two electrons transferred, four hydrogen ions are translocated across the cytoplasmic membrane), and thus conserves the redox energy in a proton gradient. This subunit may bind ubiquinone. The sequence is that of NADH-quinone oxidoreductase subunit H from Pseudomonas fluorescens (strain Pf0-1).